The following is a 152-amino-acid chain: Cell division protein SepF (152 aa).

The span at 23–32 (EVAREPEPMQ) shows a compositional bias: basic and acidic residues. Residues 23–42 (EVAREPEPMQKKTKKEKPSK) form a disordered region.

It belongs to the SepF family. Homodimer. Interacts with FtsZ.

It localises to the cytoplasm. Cell division protein that is part of the divisome complex and is recruited early to the Z-ring. Probably stimulates Z-ring formation, perhaps through the cross-linking of FtsZ protofilaments. Its function overlaps with FtsA. The sequence is that of Cell division protein SepF from Listeria welshimeri serovar 6b (strain ATCC 35897 / DSM 20650 / CCUG 15529 / CIP 8149 / NCTC 11857 / SLCC 5334 / V8).